Here is a 142-residue protein sequence, read N- to C-terminus: Deoxyuridine 5'-triphosphate nucleotidohydrolase (142 aa).

Belongs to the dUTPase family. It depends on Mg(2+) as a cofactor.

The enzyme catalyses dUTP + H2O = dUMP + diphosphate + H(+). In terms of biological role, this enzyme is involved in nucleotide metabolism: it produces dUMP, the immediate precursor of thymidine nucleotides and it decreases the intracellular concentration of dUTP so that uracil cannot be incorporated into DNA. The sequence is that of Deoxyuridine 5'-triphosphate nucleotidohydrolase (DUT) from Swinepox virus (strain Kasza) (SWPV).